Consider the following 453-residue polypeptide: Na(+)/H(+) antiporter NhaA (453 aa).

11 consecutive transmembrane segments (helical) span residues 28-48 (FLHI…AALI), 79-99 (LHFL…GMEI), 115-135 (ALPL…YFIL), 144-164 (GWAV…ALLG), 173-193 (VFLL…IAVF), 196-216 (GGMD…VLGM), 241-261 (TGAH…VFAP), 321-341 (VAFG…LDGI), 355-375 (VLIA…FLMV), 393-413 (LVGL…TLAF), and 424-444 (LGIL…GFFQ).

This sequence belongs to the NhaA Na(+)/H(+) (TC 2.A.33) antiporter family.

The protein resides in the cell inner membrane. It catalyses the reaction Na(+)(in) + 2 H(+)(out) = Na(+)(out) + 2 H(+)(in). Its function is as follows. Na(+)/H(+) antiporter that extrudes sodium in exchange for external protons. In Janthinobacterium sp. (strain Marseille) (Minibacterium massiliensis), this protein is Na(+)/H(+) antiporter NhaA.